Consider the following 476-residue polypeptide: Protein DETOXIFICATION 17 (476 aa).

Helical transmembrane passes span 29–51, 70–90, 111–131, 140–160, 177–197, 205–225, 252–272, 286–306, 326–346, 363–383, 405–425, and 431–451; these read LWLS…ISVM, FASV…ETLC, FVLL…EQIL, IASV…AYGL, VFVC…LFVL, GAAL…SCYV, IAFP…LLVL, VLSI…GLGG, LAVY…VTVL, IIAY…LDGL, LGSY…HFHI, and WLGI…VTIF.

It belongs to the multi antimicrobial extrusion (MATE) (TC 2.A.66.1) family.

It localises to the membrane. The polypeptide is Protein DETOXIFICATION 17 (Arabidopsis thaliana (Mouse-ear cress)).